Consider the following 469-residue polypeptide: Ribulose bisphosphate carboxylase large chain (469 aa).

A propeptide spanning residues 1–2 (MS) is cleaved from the precursor. Proline 3 is modified (N-acetylproline). Lysine 14 is modified (N6,N6,N6-trimethyllysine). Asparagine 123 and threonine 173 together coordinate substrate. Lysine 175 (proton acceptor) is an active-site residue. Lysine 177 lines the substrate pocket. Mg(2+) is bound by residues lysine 201, aspartate 203, and glutamate 204. Residue lysine 201 is modified to N6-carboxylysine. Histidine 294 acts as the Proton acceptor in catalysis. Positions 295, 327, and 379 each coordinate substrate.

This sequence belongs to the RuBisCO large chain family. Type I subfamily. As to quaternary structure, heterohexadecamer of 8 large chains and 8 small chains; disulfide-linked. The disulfide link is formed within the large subunit homodimers. Requires Mg(2+) as cofactor. In terms of processing, the disulfide bond which can form in the large chain dimeric partners within the hexadecamer appears to be associated with oxidative stress and protein turnover.

The protein localises to the plastid. It localises to the chloroplast. It catalyses the reaction 2 (2R)-3-phosphoglycerate + 2 H(+) = D-ribulose 1,5-bisphosphate + CO2 + H2O. It carries out the reaction D-ribulose 1,5-bisphosphate + O2 = 2-phosphoglycolate + (2R)-3-phosphoglycerate + 2 H(+). Functionally, ruBisCO catalyzes two reactions: the carboxylation of D-ribulose 1,5-bisphosphate, the primary event in carbon dioxide fixation, as well as the oxidative fragmentation of the pentose substrate in the photorespiration process. Both reactions occur simultaneously and in competition at the same active site. In Dianthus caryophyllus (Carnation), this protein is Ribulose bisphosphate carboxylase large chain.